We begin with the raw amino-acid sequence, 395 residues long: MGADGTMSPVLTKRRPDQEINKLDIKPNHEVDIARRAPHSKPPFTLSDLRSAIPPHCFHRSLLMSSSYLIRDFALAFLFYHSAVTYIPLLPKPLACMAWPVYWFLQGSNMLGIWVIAHECGHQAFSNYGWVNDAVGFFLHTSLLVPYFPFKYSHRRHHSNTNSVEHDEVFVPRHKDGVQWYYRFFNNTPGRVLTLTLTLLVGWPSYLAFNASGRPYDGFASHYNPNAQIFNLRERFWVHVSNIGILAIYYILYRLATTKGLPWLLSIYGVPVLILNAFVVLITFLQHSHPALPHYNSDEWDWLRGALATVDRDYGFLNEVFHDITDTHVIHHLFPTMPHYNAKEATVSIRPILKDYYKFDRTPIWRALWREAKECLYVEADGTGSKGVLWFKSKF.

Helical transmembrane passes span 73–93 and 97–117; these read FALAFLFYHSAVTYIPLLPKP and MAWPVYWFLQGSNMLGIWVIA. The Histidine box-1 signature appears at 118 to 122; that stretch reads HECGH. Residues 130 to 150 form a helical membrane-spanning segment; the sequence is WVNDAVGFFLHTSLLVPYFPF. Residues 154–158 carry the Histidine box-2 motif; the sequence is HRRHH. Transmembrane regions (helical) follow at residues 192–212, 236–256, and 264–284; these read VLTLTLTLLVGWPSYLAFNAS, FWVHVSNIGILAIYYILYRLA, and LLSIYGVPVLILNAFVVLITF. The Histidine box-3 signature appears at 328-332; the sequence is HVIHH.

Belongs to the fatty acid desaturase type 1 family.

The protein localises to the membrane. The catalysed reaction is a (9Z,12Z)-octadecadienoyl-containing glycerolipid + 2 Fe(II)-[cytochrome b5] + O2 + 2 H(+) = a (9Z,11E,13Z)-octadeca-9,11,13-trienoyl-containing glycerolipid + 2 Fe(III)-[cytochrome b5] + 2 H2O. It functions in the pathway lipid metabolism; polyunsaturated fatty acid biosynthesis. Its function is as follows. Converts a single cis double bond at position 12 of linoleate incorporated into phosphatidylcholine into conjugated 11-trans and 13-cis double bonds. Produces punicic acid (18:3(9Z,11E,13Z)) from linoleic acid and conjugated octadecatetraenoic fatty acid from gamma-linolenic acid. No activity with cis- and trans-vaccenic acid, alpha-linolenic acid or homo-gamma-linolenic acid. 16:2(9Z,12Z), 18:3(9Z,12Z,15Z) and 18:2(9Z,12Z) are substrates for the conjugase to form trans-Delta(11) and cis-Delta(13) double bonds. No activity on the cis-Delta(9) double bonds of oleic and palmitoleic acids. The polypeptide is Bifunctional fatty acid conjugase/Delta(12)-oleate desaturase (Punica granatum (Pomegranate)).